A 277-amino-acid polypeptide reads, in one-letter code: Shikimate dehydrogenase (NADP(+)) (277 aa).

Residues 15-17 (SLS) and T62 each bind shikimate. K66 acts as the Proton acceptor in catalysis. Shikimate is bound by residues N87 and D102. NADP(+) is bound by residues 127-131 (GAGGA), 151-156 (NRTVDK), and I219. Y221 contributes to the shikimate binding site. G242 is an NADP(+) binding site.

It belongs to the shikimate dehydrogenase family. In terms of assembly, homodimer.

The enzyme catalyses shikimate + NADP(+) = 3-dehydroshikimate + NADPH + H(+). It functions in the pathway metabolic intermediate biosynthesis; chorismate biosynthesis; chorismate from D-erythrose 4-phosphate and phosphoenolpyruvate: step 4/7. Its function is as follows. Involved in the biosynthesis of the chorismate, which leads to the biosynthesis of aromatic amino acids. Catalyzes the reversible NADPH linked reduction of 3-dehydroshikimate (DHSA) to yield shikimate (SA). In Bacillus cereus (strain ATCC 10987 / NRS 248), this protein is Shikimate dehydrogenase (NADP(+)).